The following is a 171-amino-acid chain: Protein hunchback (171 aa).

Disordered regions lie at residues P14 to I93 and S124 to A171. Residues H17–S31 show a composition bias toward basic residues. 2 stretches are compositionally biased toward low complexity: residues N32–Q42 and S52–L80. Residues E152–A171 are compositionally biased toward basic and acidic residues.

The protein belongs to the hunchback C2H2-type zinc-finger protein family.

The protein localises to the nucleus. Functionally, gap class segmentation protein that controls development of head structures. This Scaptomyza albovittata (Fruit fly) protein is Protein hunchback (hb).